Here is an 87-residue protein sequence, read N- to C-terminus: Small ribosomal subunit protein bS16 (87 aa).

This sequence belongs to the bacterial ribosomal protein bS16 family.

This chain is Small ribosomal subunit protein bS16, found in Psychrobacter sp. (strain PRwf-1).